The following is an 858-amino-acid chain: Leucine--tRNA ligase (858 aa).

The short motif at Pro42–His52 is the 'HIGH' region element. Residues Lys618 to Ser622 carry the 'KMSKS' region motif. An ATP-binding site is contributed by Lys621.

The protein belongs to the class-I aminoacyl-tRNA synthetase family.

It localises to the cytoplasm. The catalysed reaction is tRNA(Leu) + L-leucine + ATP = L-leucyl-tRNA(Leu) + AMP + diphosphate. In Aliivibrio salmonicida (strain LFI1238) (Vibrio salmonicida (strain LFI1238)), this protein is Leucine--tRNA ligase.